Reading from the N-terminus, the 325-residue chain is Hydroxymethylglutaryl-CoA lyase, mitochondrial (325 aa).

A mitochondrion-targeting transit peptide spans 1–27 (MATVKKVLPRRLVGLATLRAVSTSSVG). Positions 33-300 (VKIVEVGPRD…HTGVNLQKLL (268 aa)) constitute a Pyruvate carboxyltransferase domain. Arg-41 lines the substrate pocket. Asp-42 is a binding site for a divalent metal cation. Lys-48 bears the N6-acetyllysine; alternate mark. At Lys-48 the chain carries N6-succinyllysine; alternate. At Lys-111 the chain carries N6-acetyllysine. Lys-137 and Lys-179 each carry N6-acetyllysine; alternate. Lys-137 and Lys-179 each carry N6-succinyllysine; alternate. His-233 and His-235 together coordinate a divalent metal cation. Cys-266 is an active-site residue. Asn-275 lines the a divalent metal cation pocket. Residues 323-325 (CKL) carry the Microbody targeting signal motif. Lys-324 carries the post-translational modification N6-acetyllysine.

Belongs to the HMG-CoA lyase family. Homodimer; disulfide-linked. Can also form homotetramers.

The protein localises to the mitochondrion matrix. The protein resides in the peroxisome. It carries out the reaction (3S)-3-hydroxy-3-methylglutaryl-CoA = acetoacetate + acetyl-CoA. Its pathway is metabolic intermediate metabolism; (S)-3-hydroxy-3-methylglutaryl-CoA degradation; acetoacetate from (S)-3-hydroxy-3-methylglutaryl-CoA: step 1/1. In terms of biological role, mitochondrial 3-hydroxy-3-methylglutaryl-CoA lyase that catalyzes a cation-dependent cleavage of (S)-3-hydroxy-3-methylglutaryl-CoA into acetyl-CoA and acetoacetate, a key step in ketogenesis. Terminal step in leucine catabolism. Ketone bodies (beta-hydroxybutyrate, acetoacetate and acetone) are essential as an alternative source of energy to glucose, as lipid precursors and as regulators of metabolism. This is Hydroxymethylglutaryl-CoA lyase, mitochondrial (HMGCL) from Bos taurus (Bovine).